We begin with the raw amino-acid sequence, 207 residues long: Ribonuclease HII (207 aa).

Residues 20–207 (QLFAGVDEVG…KPVKRVLGIE (188 aa)) form the RNase H type-2 domain. A divalent metal cation contacts are provided by aspartate 26, glutamate 27, and aspartate 118.

It belongs to the RNase HII family. Mn(2+) is required as a cofactor. Mg(2+) serves as cofactor.

The protein localises to the cytoplasm. The catalysed reaction is Endonucleolytic cleavage to 5'-phosphomonoester.. Endonuclease that specifically degrades the RNA of RNA-DNA hybrids. The sequence is that of Ribonuclease HII from Aliivibrio fischeri (strain MJ11) (Vibrio fischeri).